The sequence spans 445 residues: tRNA-2-methylthio-N(6)-dimethylallyladenosine synthase (445 aa).

The 116-residue stretch at Gln-2–Lys-117 folds into the MTTase N-terminal domain. Residues Cys-11, Cys-47, Cys-80, Cys-157, Cys-161, and Cys-164 each coordinate [4Fe-4S] cluster. The Radical SAM core domain occupies Lys-143–Glu-374. The region spanning Lys-377 to Asn-441 is the TRAM domain.

The protein belongs to the methylthiotransferase family. MiaB subfamily. In terms of assembly, monomer. [4Fe-4S] cluster serves as cofactor.

It localises to the cytoplasm. It catalyses the reaction N(6)-dimethylallyladenosine(37) in tRNA + (sulfur carrier)-SH + AH2 + 2 S-adenosyl-L-methionine = 2-methylsulfanyl-N(6)-dimethylallyladenosine(37) in tRNA + (sulfur carrier)-H + 5'-deoxyadenosine + L-methionine + A + S-adenosyl-L-homocysteine + 2 H(+). Functionally, catalyzes the methylthiolation of N6-(dimethylallyl)adenosine (i(6)A), leading to the formation of 2-methylthio-N6-(dimethylallyl)adenosine (ms(2)i(6)A) at position 37 in tRNAs that read codons beginning with uridine. This chain is tRNA-2-methylthio-N(6)-dimethylallyladenosine synthase, found in Ehrlichia ruminantium (strain Welgevonden).